The primary structure comprises 73 residues: Guanine nucleotide-binding protein G(I)/G(S)/G(O) subunit gamma-11 (73 aa).

Residues Asp-51–Ser-73 form a disordered region. The residue at position 70 (Cys-70) is a Cysteine methyl ester. Cys-70 is lipidated: S-farnesyl cysteine. Positions Val-71 to Ser-73 are cleaved as a propeptide — removed in mature form.

Belongs to the G protein gamma family. G proteins are composed of 3 units, alpha, beta and gamma. Interacts with beta-1 and beta-3, but not with beta-2. As to expression, abundantly expressed in all tissues tested except for brain.

It localises to the cell membrane. Its function is as follows. Guanine nucleotide-binding proteins (G proteins) are involved as a modulator or transducer in various transmembrane signaling systems. The beta and gamma chains are required for the GTPase activity, for replacement of GDP by GTP, and for G protein-effector interaction. The polypeptide is Guanine nucleotide-binding protein G(I)/G(S)/G(O) subunit gamma-11 (GNG11) (Homo sapiens (Human)).